The following is a 680-amino-acid chain: Galactose oxidase (680 aa).

Positions 1-24 (MKHLLTLALCFSSINAVAVTVPHK) are cleaved as a signal peptide. Residues 25-41 (AVGTGIPEGSLQFLSLR) constitute a propeptide that is removed on maturation. An F5/8 type C domain is found at 42–189 (ASAPIGSAIS…SIAEINVFQA (148 aa)). A disulfide bond links Cys59 and Cys68. 5 Kelch repeats span residues 223-268 (RVLM…HDMF), 279-321 (QIVV…TMSD), 323-372 (RVFT…LYRS), 436-490 (KILT…VLPD), and 492-544 (STFI…LLLP). Residues 269–313 (CPGISMDGNGQIVVTGGNDAKKTSLYDSSSDSWIPGPDMQVARGY) constitute a cross-link (3'-(S-cysteinyl)-tyrosine (Cys-Tyr)). Position 313 (Tyr313) interacts with Cu cation. Cu cation-binding residues include Tyr536 and His537. Tyr536 (proton acceptor) is an active-site residue. A disulfide bridge links Cys556 with Cys559. His622 serves as a coordination point for Cu cation.

As to quaternary structure, monomer. It depends on Cu(2+) as a cofactor. Galactose oxidase contains a protein-derived free radical cofactor. In the active state, Tyr-313, which is cross-linked to Cys-269 via a thioether bond, is oxidized to a radical and acts with Cu(2+) as a two-electron acceptor in the oxidation reaction. The cross-link is believed to modulate the redox potential of the tyrosyl radical, which is further stabilized by a stacking interaction with Trp-331 in the active site. The post-translational formation of the cross-link is closely linked to the propeptide cleavage event, and both are copper-dependent, autocatalytic processes. The propeptide may act as an intramolecular chaperone, facilitating thioester bond formation and copper binding by positioning of active-site residues, including copper ligands.

Its subcellular location is the secreted. The enzyme catalyses D-galactose + O2 = D-galacto-hexodialdose + H2O2. With respect to regulation, inhibited by diethyldithiocarbamate. Functionally, catalyzes the sterospecific oxidation of primary alcohols to the corresponding aldehydes. The biologically relevant substrate of the enzyme is not known as the enzyme exhibits broad substrate specificity from small alcohols through sugars to oligo- and polysaccharides. In Gibberella zeae (Wheat head blight fungus), this protein is Galactose oxidase (GAOA).